We begin with the raw amino-acid sequence, 327 residues long: UDP-N-acetylenolpyruvoylglucosamine reductase (327 aa).

The region spanning 42 to 223 (RTGGLAELFY…RAAMDEVALH (182 aa)) is the FAD-binding PCMH-type domain. Arginine 188 is a catalytic residue. The active-site Proton donor is the serine 237. Residue glutamate 307 is part of the active site.

It belongs to the MurB family. It depends on FAD as a cofactor.

The protein resides in the cytoplasm. The enzyme catalyses UDP-N-acetyl-alpha-D-muramate + NADP(+) = UDP-N-acetyl-3-O-(1-carboxyvinyl)-alpha-D-glucosamine + NADPH + H(+). Its pathway is cell wall biogenesis; peptidoglycan biosynthesis. Its function is as follows. Cell wall formation. The protein is UDP-N-acetylenolpyruvoylglucosamine reductase of Bartonella tribocorum (strain CIP 105476 / IBS 506).